We begin with the raw amino-acid sequence, 97 residues long: Large ribosomal subunit protein uL23 (97 aa).

It belongs to the universal ribosomal protein uL23 family. In terms of assembly, part of the 50S ribosomal subunit. Contacts protein L29, and trigger factor when it is bound to the ribosome.

One of the early assembly proteins it binds 23S rRNA. One of the proteins that surrounds the polypeptide exit tunnel on the outside of the ribosome. Forms the main docking site for trigger factor binding to the ribosome. This chain is Large ribosomal subunit protein uL23, found in Chelativorans sp. (strain BNC1).